We begin with the raw amino-acid sequence, 195 residues long: uncharacterized protein (195 aa).

Residues 10–70 (EETVARLLQA…ATAYEVLRRQ (61 aa)) enclose the HTH tetR-type domain. A DNA-binding region (H-T-H motif) is located at residues 33-52 (SAAVITKRAGVSVGALFRHF).

This is an uncharacterized protein from Mycobacterium tuberculosis (strain CDC 1551 / Oshkosh).